We begin with the raw amino-acid sequence, 690 residues long: Protein arginine N-methyltransferase 7 (690 aa).

SAM-dependent MTase PRMT-type domains lie at 5–355 (FQDS…FSLW) and 364–690 (KEPL…EEEQ).

It belongs to the class I-like SAM-binding methyltransferase superfamily. Protein arginine N-methyltransferase family. PRMT7 subfamily.

Essential arginine methyltransferase that can both catalyze the formation of omega-N monomethylarginine (MMA) and symmetrical dimethylarginine (sDMA). Specifically mediates the symmetrical dimethylation of arginine residues in the small nuclear ribonucleoproteins SmD1 and SmD3. The protein is Protein arginine N-methyltransferase 7 (Art7) of Anopheles gambiae (African malaria mosquito).